A 197-amino-acid chain; its full sequence is Adenylate kinase (197 aa).

Position 16-21 (16-21) interacts with ATP; sequence GAGKGT. Residues 36 to 65 form an NMP region; sequence STGDILRDHVARGTELGQQVKPILDAGHLV. Residues Thr-37, Arg-42, 63-65, 90-93, and Gln-97 each bind AMP; these read HLV and GFPR. The LID stretch occupies residues 131 to 147; sequence ERGNQAQARGEAVRSDD. Arg-132 contributes to the ATP binding site. Positions 144 and 155 each coordinate AMP. Gly-183 serves as a coordination point for ATP.

The protein belongs to the adenylate kinase family. In terms of assembly, monomer.

The protein resides in the cytoplasm. It carries out the reaction AMP + ATP = 2 ADP. Its pathway is purine metabolism; AMP biosynthesis via salvage pathway; AMP from ADP: step 1/1. In terms of biological role, catalyzes the reversible transfer of the terminal phosphate group between ATP and AMP. Plays an important role in cellular energy homeostasis and in adenine nucleotide metabolism. The chain is Adenylate kinase from Deinococcus deserti (strain DSM 17065 / CIP 109153 / LMG 22923 / VCD115).